We begin with the raw amino-acid sequence, 119 residues long: Large ribosomal subunit protein bL20 (119 aa).

It belongs to the bacterial ribosomal protein bL20 family.

Functionally, binds directly to 23S ribosomal RNA and is necessary for the in vitro assembly process of the 50S ribosomal subunit. It is not involved in the protein synthesizing functions of that subunit. The chain is Large ribosomal subunit protein bL20 from Alcanivorax borkumensis (strain ATCC 700651 / DSM 11573 / NCIMB 13689 / SK2).